Reading from the N-terminus, the 59-residue chain is Large ribosomal subunit protein bL32 (59 aa).

Residues 1–16 (MAVPKRKTSPSKRGMR) show a composition bias toward basic residues. Residues 1-59 (MAVPKRKTSPSKRGMRRSADALKAPTYVEDKNSGELRRPHHIDLKSGMYRGRQVLEAKE) form a disordered region. Residues 28-44 (VEDKNSGELRRPHHIDL) are compositionally biased toward basic and acidic residues.

Belongs to the bacterial ribosomal protein bL32 family.

The protein is Large ribosomal subunit protein bL32 of Brucella anthropi (strain ATCC 49188 / DSM 6882 / CCUG 24695 / JCM 21032 / LMG 3331 / NBRC 15819 / NCTC 12168 / Alc 37) (Ochrobactrum anthropi).